A 965-amino-acid chain; its full sequence is Translation initiation factor IF-2 (965 aa).

The segment at 94 to 375 (RTFVRRDEAA…RGKHQESTTF (282 aa)) is disordered. Residues 104–115 (EQAAEATGNGQE) show a composition bias toward low complexity. Basic and acidic residues predominate over residues 121–177 (ELQRREEEARHEAELLEKQAQELKARQEQLAREEAERQAREQAAEAERRRAEEEAAK). The span at 181–191 (AAVAEAAAAAR) shows a compositional bias: low complexity. Residues 192 to 253 (EQAEQERASQ…KAEAEARAIR (62 aa)) show a composition bias toward basic and acidic residues. Positions 267 to 276 (PEPPPKPAEA) are enriched in pro residues. The span at 303–320 (KKPAPAAAAQPAATTQPA) shows a compositional bias: low complexity. Over residues 351–364 (TSGGVDRGWRGGPK) the composition is skewed to gly residues. Residues 465-634 (PRPPVVTVMG…LLQAEVLELK (170 aa)) enclose the tr-type G domain. The tract at residues 474–481 (GHVDHGKT) is G1. A GTP-binding site is contributed by 474–481 (GHVDHGKT). Positions 499-503 (GITQH) are G2. The tract at residues 520 to 523 (DTPG) is G3. GTP is bound by residues 520 to 524 (DTPGH) and 574 to 577 (NKID). Positions 574 to 577 (NKID) are G4. Positions 610–612 (SAK) are G5.

It belongs to the TRAFAC class translation factor GTPase superfamily. Classic translation factor GTPase family. IF-2 subfamily.

The protein resides in the cytoplasm. Functionally, one of the essential components for the initiation of protein synthesis. Protects formylmethionyl-tRNA from spontaneous hydrolysis and promotes its binding to the 30S ribosomal subunits. Also involved in the hydrolysis of GTP during the formation of the 70S ribosomal complex. The protein is Translation initiation factor IF-2 of Paraburkholderia phymatum (strain DSM 17167 / CIP 108236 / LMG 21445 / STM815) (Burkholderia phymatum).